The primary structure comprises 132 residues: Small ribosomal subunit protein uS19 (132 aa).

The protein belongs to the universal ribosomal protein uS19 family.

Its function is as follows. Protein S19 forms a complex with S13 that binds strongly to the 16S ribosomal RNA. In Pyrococcus horikoshii (strain ATCC 700860 / DSM 12428 / JCM 9974 / NBRC 100139 / OT-3), this protein is Small ribosomal subunit protein uS19 (rps19).